Reading from the N-terminus, the 597-residue chain is Arginine--tRNA ligase (597 aa).

A 'HIGH' region motif is present at residues 125-135 (PNTNKPLHLGH).

It belongs to the class-I aminoacyl-tRNA synthetase family. In terms of assembly, monomer.

It localises to the cytoplasm. It carries out the reaction tRNA(Arg) + L-arginine + ATP = L-arginyl-tRNA(Arg) + AMP + diphosphate. The polypeptide is Arginine--tRNA ligase (Bacteroides thetaiotaomicron (strain ATCC 29148 / DSM 2079 / JCM 5827 / CCUG 10774 / NCTC 10582 / VPI-5482 / E50)).